A 255-amino-acid chain; its full sequence is Thiazole synthase (255 aa).

Lysine 95 (schiff-base intermediate with DXP) is an active-site residue. Residues glycine 156, 182–183 (AG), and 204–205 (NT) contribute to the 1-deoxy-D-xylulose 5-phosphate site.

This sequence belongs to the ThiG family. In terms of assembly, homotetramer. Forms heterodimers with either ThiH or ThiS.

Its subcellular location is the cytoplasm. It carries out the reaction [ThiS sulfur-carrier protein]-C-terminal-Gly-aminoethanethioate + 2-iminoacetate + 1-deoxy-D-xylulose 5-phosphate = [ThiS sulfur-carrier protein]-C-terminal Gly-Gly + 2-[(2R,5Z)-2-carboxy-4-methylthiazol-5(2H)-ylidene]ethyl phosphate + 2 H2O + H(+). It participates in cofactor biosynthesis; thiamine diphosphate biosynthesis. Functionally, catalyzes the rearrangement of 1-deoxy-D-xylulose 5-phosphate (DXP) to produce the thiazole phosphate moiety of thiamine. Sulfur is provided by the thiocarboxylate moiety of the carrier protein ThiS. In vitro, sulfur can be provided by H(2)S. The chain is Thiazole synthase from Aeromonas salmonicida (strain A449).